The following is a 227-amino-acid chain: 7-cyano-7-deazaguanine synthase (227 aa).

Position 8–18 (8–18) interacts with ATP; that stretch reads FSGGQDSTTCL. 4 residues coordinate Zn(2+): cysteine 187, cysteine 196, cysteine 199, and cysteine 202.

This sequence belongs to the QueC family. Zn(2+) is required as a cofactor.

The enzyme catalyses 7-carboxy-7-deazaguanine + NH4(+) + ATP = 7-cyano-7-deazaguanine + ADP + phosphate + H2O + H(+). It participates in purine metabolism; 7-cyano-7-deazaguanine biosynthesis. Its function is as follows. Catalyzes the ATP-dependent conversion of 7-carboxy-7-deazaguanine (CDG) to 7-cyano-7-deazaguanine (preQ(0)). This chain is 7-cyano-7-deazaguanine synthase, found in Aliivibrio fischeri (strain ATCC 700601 / ES114) (Vibrio fischeri).